A 195-amino-acid polypeptide reads, in one-letter code: FK506-binding protein 2 (195 aa).

A signal peptide spans 1-19 (MKAALFLSALASTAVGVVA). A PPIase FKBP-type domain is found at 39 to 127 (GDGVHMHYRG…VFETELVGID (89 aa)). The Prevents secretion from ER motif lies at 192-195 (HEEL).

It belongs to the FKBP-type PPIase family. FKBP2 subfamily.

The protein resides in the endoplasmic reticulum. The enzyme catalyses [protein]-peptidylproline (omega=180) = [protein]-peptidylproline (omega=0). Inhibited by both FK506 and rapamycin. Its function is as follows. PPIases accelerate the folding of proteins. It catalyzes the cis-trans isomerization of proline imidic peptide bonds in oligopeptides. This chain is FK506-binding protein 2 (FPR2), found in Gibberella zeae (strain ATCC MYA-4620 / CBS 123657 / FGSC 9075 / NRRL 31084 / PH-1) (Wheat head blight fungus).